Reading from the N-terminus, the 392-residue chain is Formate-dependent phosphoribosylglycinamide formyltransferase (392 aa).

Residues 22–23 and glutamate 82 contribute to the N(1)-(5-phospho-beta-D-ribosyl)glycinamide site; that span reads EL. ATP contacts are provided by residues arginine 114, lysine 155, 160-165, 195-198, and glutamate 203; these read SSGKGQ and EGVV. One can recognise an ATP-grasp domain in the interval 119–308; the sequence is RLAAEELQLP…EFALHVRAFL (190 aa). The Mg(2+) site is built by glutamate 267 and glutamate 279. Residues aspartate 286, lysine 355, and 362-363 each bind N(1)-(5-phospho-beta-D-ribosyl)glycinamide; that span reads RR.

It belongs to the PurK/PurT family. Homodimer.

The enzyme catalyses N(1)-(5-phospho-beta-D-ribosyl)glycinamide + formate + ATP = N(2)-formyl-N(1)-(5-phospho-beta-D-ribosyl)glycinamide + ADP + phosphate + H(+). The protein operates within purine metabolism; IMP biosynthesis via de novo pathway; N(2)-formyl-N(1)-(5-phospho-D-ribosyl)glycinamide from N(1)-(5-phospho-D-ribosyl)glycinamide (formate route): step 1/1. Functionally, involved in the de novo purine biosynthesis. Catalyzes the transfer of formate to 5-phospho-ribosyl-glycinamide (GAR), producing 5-phospho-ribosyl-N-formylglycinamide (FGAR). Formate is provided by PurU via hydrolysis of 10-formyl-tetrahydrofolate. In Klebsiella pneumoniae (strain 342), this protein is Formate-dependent phosphoribosylglycinamide formyltransferase.